Reading from the N-terminus, the 171-residue chain is MSKKSGLSFLWLSAVAFVIDLLTKYIVVQKFDLYESVNVLPVFNLTYVRNYGAAFSFLADHSGWQQYFFILLALAISGMLVYFLAKNNAEQKIQNSAYALIIGGALANMVDRAYNGFVVDFFDFYWDIYHYPVFNIADIAICIGAGLLVLDAFKSEKKKVQDKQVEKCGQK.

3 helical membrane passes run 8–28, 64–84, and 99–119; these read SFLW…YIVV, WQQY…VYFL, and ALII…GFVV. Residues D120 and D138 contribute to the active site. The helical transmembrane segment at 133 to 153 threads the bilayer; that stretch reads VFNIADIAICIGAGLLVLDAF.

It belongs to the peptidase A8 family.

The protein resides in the cell inner membrane. It catalyses the reaction Release of signal peptides from bacterial membrane prolipoproteins. Hydrolyzes -Xaa-Yaa-Zaa-|-(S,diacylglyceryl)Cys-, in which Xaa is hydrophobic (preferably Leu), and Yaa (Ala or Ser) and Zaa (Gly or Ala) have small, neutral side chains.. The protein operates within protein modification; lipoprotein biosynthesis (signal peptide cleavage). Its function is as follows. This protein specifically catalyzes the removal of signal peptides from prolipoproteins. The protein is Lipoprotein signal peptidase of Haemophilus influenzae (strain ATCC 51907 / DSM 11121 / KW20 / Rd).